Consider the following 479-residue polypeptide: Monodictyphenone cluster transcriptional coactivator mdpA (479 aa).

One can recognise an HTH iclR-type domain in the interval 77-147 (LAVQNQLLAC…DPGQVAHSAL (71 aa)). Residues 107–126 (IKDVAELAGVPETHLSRIIR) constitute a DNA-binding region (H-T-H motif). Disordered stretches follow at residues 281–305 (GPTAWSPAHPNPIRPPTPGGSHKHD) and 314–333 (TASTTPASSHNHTHTHTTNS). Pro residues predominate over residues 289–298 (HPNPIRPPTP). Low complexity predominate over residues 314–323 (TASTTPASSH).

It localises to the nucleus. Functionally, transcriptional coactivator; part of the gene cluster that mediates the biosynthesis of monodictyphenone, a prenyl xanthone derivative. With mdpE, coregulates the production of monodictyphenone. This is Monodictyphenone cluster transcriptional coactivator mdpA from Emericella nidulans (strain FGSC A4 / ATCC 38163 / CBS 112.46 / NRRL 194 / M139) (Aspergillus nidulans).